We begin with the raw amino-acid sequence, 296 residues long: MEYIKPHKGFSTLIILGITLGIDLIFSLLSTFINTYIVLRILEIFIVFFNIYQLYYILKSLTLKYCYDNENFYVLWCFGIRRVTIPFKEIEAYNVSHGEIKGVKLWGYGRNFFALGTFSVNDIGIVNMFVTATKNVIYIKCNSSIYGISPEKCDEVKNFLEKRKLVLKNWTYEKRNKVSLSKDRHFDILIFLISIVILMVTIIPFILYLRGVMPHKMPLSFDSNFKPMIYGTSREFAFKHMMYGAYNMIIFFCIYYSAYFYARYSKKLAYRLMYISFLVAFIFLIFQFKIYVTYIH.

A run of 6 helical transmembrane segments spans residues F10–L29, Y36–L58, F112–T131, I188–R210, M241–F260, and M273–I295.

The protein localises to the cell membrane. This is an uncharacterized protein from Clostridium acetobutylicum (strain ATCC 824 / DSM 792 / JCM 1419 / IAM 19013 / LMG 5710 / NBRC 13948 / NRRL B-527 / VKM B-1787 / 2291 / W).